We begin with the raw amino-acid sequence, 387 residues long: S-adenosylmethionine synthase (387 aa).

His17 provides a ligand contact to ATP. Residue Asp19 coordinates Mg(2+). Glu45 is a K(+) binding site. L-methionine is bound by residues Glu58 and Gln101. The flexible loop stretch occupies residues 101 to 111 (QSADIAMGVDA). ATP contacts are provided by residues 166–168 (DAK), 231–232 (RF), Asp240, 246–247 (RK), Ala263, and Lys267. Asp240 is an L-methionine binding site. L-methionine is bound at residue Lys271.

It belongs to the AdoMet synthase family. As to quaternary structure, homotetramer; dimer of dimers. Mg(2+) serves as cofactor. Requires K(+) as cofactor.

It is found in the cytoplasm. The catalysed reaction is L-methionine + ATP + H2O = S-adenosyl-L-methionine + phosphate + diphosphate. The protein operates within amino-acid biosynthesis; S-adenosyl-L-methionine biosynthesis; S-adenosyl-L-methionine from L-methionine: step 1/1. Its function is as follows. Catalyzes the formation of S-adenosylmethionine (AdoMet) from methionine and ATP. The overall synthetic reaction is composed of two sequential steps, AdoMet formation and the subsequent tripolyphosphate hydrolysis which occurs prior to release of AdoMet from the enzyme. This is S-adenosylmethionine synthase from Rhodospirillum centenum (strain ATCC 51521 / SW).